The sequence spans 188 residues: MATYYSNDFRAGLKIMLDGEPYAVEASEFVKPGKGQAFARVKLRRLLTGTRVEKTFKSTDSAEGADVVDMNLTYLYNDGEFWHFMNNETFEQLSADAKAIGDNAKWLLDQAECIVTLWNGQPIAVTPPNFVELEIIETDPGLKGDTAGTGGKPATLSTGAVVKVPLFVQIGEVIKVDTRSGEYVSRVK.

K34 is modified (N6-(3,6-diaminohexanoyl)-5-hydroxylysine).

The protein belongs to the elongation factor P family. Post-translationally, may be beta-lysylated on the epsilon-amino group of Lys-34 by the combined action of EpmA and EpmB, and then hydroxylated on the C5 position of the same residue by EpmC (if this protein is present). Lysylation is critical for the stimulatory effect of EF-P on peptide-bond formation. The lysylation moiety may extend toward the peptidyltransferase center and stabilize the terminal 3-CCA end of the tRNA. Hydroxylation of the C5 position on Lys-34 may allow additional potential stabilizing hydrogen-bond interactions with the P-tRNA.

It localises to the cytoplasm. It functions in the pathway protein biosynthesis; polypeptide chain elongation. In terms of biological role, involved in peptide bond synthesis. Alleviates ribosome stalling that occurs when 3 or more consecutive Pro residues or the sequence PPG is present in a protein, possibly by augmenting the peptidyl transferase activity of the ribosome. Modification of Lys-34 is required for alleviation. The sequence is that of Elongation factor P from Klebsiella pneumoniae (strain 342).